We begin with the raw amino-acid sequence, 119 residues long: Ribonuclease P protein component (119 aa).

This sequence belongs to the RnpA family. Consists of a catalytic RNA component (M1 or rnpB) and a protein subunit.

It catalyses the reaction Endonucleolytic cleavage of RNA, removing 5'-extranucleotides from tRNA precursor.. In terms of biological role, RNaseP catalyzes the removal of the 5'-leader sequence from pre-tRNA to produce the mature 5'-terminus. It can also cleave other RNA substrates such as 4.5S RNA. The protein component plays an auxiliary but essential role in vivo by binding to the 5'-leader sequence and broadening the substrate specificity of the ribozyme. In Shewanella woodyi (strain ATCC 51908 / MS32), this protein is Ribonuclease P protein component.